The following is a 146-amino-acid chain: VHLSGGEKSAVTNLWGKVNINELGGEALGRLLVVYPWTQRFFEAFGDLSSAGAVMGNPKVKAHGAKVLTSFGDALKNLDDLKGTFAKLSELHCDKLHVDPENFNRLGNVLIVVLARHFSKDFSPEVQAAWQKLVSGVAHALGHKYH.

N-acetylvaline is present on Val1. Residues 2 to 146 (HLSGGEKSAV…VAHALGHKYH (145 aa)) form the Globin domain. Thr12 bears the Phosphothreonine mark. N6-acetyllysine is present on Lys59. His63 is a heme b binding site. Lys82 carries the post-translational modification N6-acetyllysine. His92 serves as a coordination point for heme b. An S-nitrosocysteine modification is found at Cys93. Lys144 is subject to N6-acetyllysine.

The protein belongs to the globin family. Heterotetramer of two alpha chains and two beta chains. As to expression, red blood cells.

Its function is as follows. Involved in oxygen transport from the lung to the various peripheral tissues. The polypeptide is Hemoglobin subunit beta (HBB) (Ornithorhynchus anatinus (Duckbill platypus)).